A 317-amino-acid polypeptide reads, in one-letter code: Melanocyte-stimulating hormone receptor (317 aa).

A disordered region spans residues 1 to 23; the sequence is MSGQGPQRRLLGSPNATSPTTPH. Over 1–37 the chain is Extracellular; it reads MSGQGPQRRLLGSPNATSPTTPHFKLAANQTGPRCLE. Asparagine 29 is a glycosylation site (N-linked (GlcNAc...) asparagine). Residues 38 to 63 traverse the membrane as a helical segment; it reads VSIPNGLFLSLGLVSVVENVLVVAAI. The Cytoplasmic portion of the chain corresponds to 64 to 72; that stretch reads AKNRNLHSP. A helical membrane pass occupies residues 73–93; the sequence is MYYFIGCLAVSDLLVSVTNVL. At 94 to 118 the chain is on the extracellular side; sequence ETAVMLLVEAGALAAQAAVVQQLDD. Residues 119-140 form a helical membrane-spanning segment; sequence IIDVLICGSMVSSLCFLGAIAV. At 141–163 the chain is on the cytoplasmic side; that stretch reads DRYLSIFYALRYHSIVTLPRAWR. Residues 164 to 183 traverse the membrane as a helical segment; it reads AISAIWVASVLSSTLFIAYY. The Extracellular segment spans residues 184–191; it reads NHTAVLLC. The helical transmembrane segment at 192 to 211 threads the bilayer; it reads LVSFFVAMLVLMAVLYVHML. Over 212-240 the chain is Cytoplasmic; that stretch reads ARARQHARGIARLRKRQHSVHQGFGLKGA. A helical membrane pass occupies residues 241-266; the sequence is ATLTILLGIFFLCWGPFFLHLSLMVL. The Extracellular segment spans residues 267 to 279; it reads CPQHPICGCVFQN. Residues 280–300 traverse the membrane as a helical segment; it reads FNLFLTLIICNSIIDPFIYAF. The Cytoplasmic segment spans residues 301 to 317; it reads RSQELRKTLQEVVLCSW. Cysteine 315 carries S-palmitoyl cysteine lipidation.

It belongs to the G-protein coupled receptor 1 family. As to quaternary structure, interacts with MGRN1, but does not undergo MGRN1-mediated ubiquitination; this interaction competes with GNAS-binding and thus inhibits agonist-induced cAMP production. Interacts with OPN3; the interaction results in a decrease in MC1R-mediated cAMP signaling and ultimately a decrease in melanin production in melanocytes.

It localises to the cell membrane. In terms of biological role, receptor for MSH (alpha, beta and gamma) and ACTH. The activity of this receptor is mediated by G proteins which activate adenylate cyclase. Mediates melanogenesis, the production of eumelanin (black/brown) and phaeomelanin (red/yellow), via regulation of cAMP signaling in melanocytes. The protein is Melanocyte-stimulating hormone receptor (MC1R) of Vulpes vulpes (Red fox).